Reading from the N-terminus, the 234-residue chain is Lactate utilization protein C 1 (234 aa).

The protein belongs to the LutC/YkgG family.

Its function is as follows. Is involved in L-lactate degradation and allows cells to grow with lactate as the sole carbon source. The polypeptide is Lactate utilization protein C 1 (Bacillus mycoides (strain KBAB4) (Bacillus weihenstephanensis)).